The following is a 553-amino-acid chain: CDP-diacylglycerol--glycerol-3-phosphate 3-phosphatidyltransferase, mitochondrial (553 aa).

The N-terminal 25 residues, 1–25, are a transit peptide targeting the mitochondrion; the sequence is MAAPAAGPVFWRRLLGLLPGRPGLA. Ser-46 carries the phosphoserine modification. Position 121-128 (121-128) interacts with ATP; sequence ASLYLGTG. PLD phosphodiesterase domains follow at residues 212 to 238 and 457 to 490; these read TIGLQHIKVYLFDNNVVLSGANLSDSY and TGWTFHAKGLWLYLAGSSLPCLTLIGSPNFGYRS. Active-site residues include His-217, Lys-219, and Asp-224.

This sequence belongs to the CDP-alcohol phosphatidyltransferase class-II family.

It is found in the mitochondrion. The catalysed reaction is a CDP-1,2-diacyl-sn-glycerol + sn-glycerol 3-phosphate = a 1,2-diacyl-sn-glycero-3-phospho-(1'-sn-glycero-3'-phosphate) + CMP + H(+). It participates in phospholipid metabolism; phosphatidylglycerol biosynthesis; phosphatidylglycerol from CDP-diacylglycerol: step 1/2. Its activity is regulated as follows. Activated by calcium and magnesium and inhibited by other bivalent cations. Functionally, functions in the biosynthesis of the anionic phospholipids phosphatidylglycerol and cardiolipin. This Cricetulus griseus (Chinese hamster) protein is CDP-diacylglycerol--glycerol-3-phosphate 3-phosphatidyltransferase, mitochondrial (PGS1).